A 355-amino-acid polypeptide reads, in one-letter code: Eukaryotic initiation factor 4A-13 (355 aa).

The Q motif signature appears at 40–68 (DSFDAMGLQENLLRGIYAYGFEKPSAIQQ). The Helicase ATP-binding domain maps to 71-241 (IVPFCKGLDV…RKFMNQPVRI (171 aa)). Residue 84–91 (AQSGTGKT) participates in ATP binding. The short motif at 189-192 (DEAD) is the DEAD box element. Positions 252–355 (GIKQFYVNVD…QQVSLVINYD (104 aa)) constitute a Helicase C-terminal domain.

This sequence belongs to the DEAD box helicase family. eIF4A subfamily. EIF4F is a multi-subunit complex, the composition of which varies with external and internal environmental conditions. It is composed of at least EIF4A, EIF4E and EIF4G.

The enzyme catalyses ATP + H2O = ADP + phosphate + H(+). ATP-dependent RNA helicase which is a subunit of the eIF4F complex involved in cap recognition and is required for mRNA binding to ribosome. In the current model of translation initiation, eIF4A unwinds RNA secondary structures in the 5'-UTR of mRNAs which is necessary to allow efficient binding of the small ribosomal subunit, and subsequent scanning for the initiator codon. The polypeptide is Eukaryotic initiation factor 4A-13 (Nicotiana tabacum (Common tobacco)).